Consider the following 89-residue polypeptide: Extender of the chronological lifespan protein ecl3 (89 aa).

This sequence belongs to the ecl1 family.

It is found in the nucleus. Involved in chronological cell aging. This chain is Extender of the chronological lifespan protein ecl3 (ecl3), found in Schizosaccharomyces pombe (strain 972 / ATCC 24843) (Fission yeast).